Consider the following 270-residue polypeptide: Orotidine 5'-phosphate decarboxylase (270 aa).

Substrate contacts are provided by residues D39, 61-63, 93-102, Y221, and R239; these read KTH and DRKFADIGNT. Catalysis depends on K95, which acts as the Proton donor.

The protein belongs to the OMP decarboxylase family.

It catalyses the reaction orotidine 5'-phosphate + H(+) = UMP + CO2. It participates in pyrimidine metabolism; UMP biosynthesis via de novo pathway; UMP from orotate: step 2/2. The protein is Orotidine 5'-phosphate decarboxylase (URA3) of Candida albicans (strain SC5314 / ATCC MYA-2876) (Yeast).